A 359-amino-acid chain; its full sequence is Putative plant UBX domain-containing protein 15 (359 aa).

The UBX domain occupies 277 to 357 (DRSVVCSISV…GIANSIISVT (81 aa)).

The protein is Putative plant UBX domain-containing protein 15 of Arabidopsis thaliana (Mouse-ear cress).